The chain runs to 600 residues: UvrABC system protein C (600 aa).

In terms of domain architecture, GIY-YIG spans 15–100; it reads NSTGVYQYFN…IKQLHPKYNI (86 aa). The region spanning 203–238 is the UVR domain; that stretch reads SVLLKNLEKQMLVLAQNENYEEAAKVRDQIAMIKDL.

This sequence belongs to the UvrC family. Interacts with UvrB in an incision complex.

The protein localises to the cytoplasm. Its function is as follows. The UvrABC repair system catalyzes the recognition and processing of DNA lesions. UvrC both incises the 5' and 3' sides of the lesion. The N-terminal half is responsible for the 3' incision and the C-terminal half is responsible for the 5' incision. The chain is UvrABC system protein C from Campylobacter jejuni subsp. jejuni serotype O:2 (strain ATCC 700819 / NCTC 11168).